Reading from the N-terminus, the 219-residue chain is Transcriptional regulator AcuR (219 aa).

Positions 1-25 are disordered; that stretch reads MPLTDTPPSVPQKPRRGRPRGAPDA. The HTH tetR-type domain occupies 26–86; it reads SLAHQSLIRA…ALIEAYDTYF (61 aa). Positions 49 to 68 form a DNA-binding region, H-T-H motif; that stretch reads GVDEILKAARVPKGSFYHYF.

Functionally, a transcriptional repressor for its operon. Probably binds to 2 operator sequences in the promoter. This is Transcriptional regulator AcuR (acuR) from Cereibacter sphaeroides (strain ATCC 17023 / DSM 158 / JCM 6121 / CCUG 31486 / LMG 2827 / NBRC 12203 / NCIMB 8253 / ATH 2.4.1.) (Rhodobacter sphaeroides).